The sequence spans 355 residues: Peptide chain release factor 1 (355 aa).

N5-methylglutamine is present on Q231.

This sequence belongs to the prokaryotic/mitochondrial release factor family. Post-translationally, methylated by PrmC. Methylation increases the termination efficiency of RF1.

The protein localises to the cytoplasm. Its function is as follows. Peptide chain release factor 1 directs the termination of translation in response to the peptide chain termination codons UAG and UAA. The chain is Peptide chain release factor 1 from Erythrobacter litoralis (strain HTCC2594).